The primary structure comprises 108 residues: uncharacterized protein (108 aa).

This sequence to H.influenzae HI_0341.

This is an uncharacterized protein from Escherichia coli (strain K12).